The sequence spans 221 residues: Holliday junction branch migration complex subunit RuvA (221 aa).

Residues 1 to 61 (MQIYQFGKIV…DYTKITYGFA (61 aa)) are domain I. The domain II stretch occupies residues 62–139 (SFRERILFED…RFNENHKNQT (78 aa)). The interval 133–155 (ENHKNQTEETNQDSQEKELEKKD) is disordered. The interval 140 to 166 (EETNQDSQEKELEKKDDLADITIQKSN) is flexible linker. Basic and acidic residues predominate over residues 146–155 (SQEKELEKKD). The tract at residues 167 to 221 (LEDKTAANLEDTLKMLGFKPRQIDYALTKVEPNENFENLIENAIKIISNAREFRN) is domain III.

Belongs to the RuvA family. Homotetramer. Forms an RuvA(8)-RuvB(12)-Holliday junction (HJ) complex. HJ DNA is sandwiched between 2 RuvA tetramers; dsDNA enters through RuvA and exits via RuvB. An RuvB hexamer assembles on each DNA strand where it exits the tetramer. Each RuvB hexamer is contacted by two RuvA subunits (via domain III) on 2 adjacent RuvB subunits; this complex drives branch migration. In the full resolvosome a probable DNA-RuvA(4)-RuvB(12)-RuvC(2) complex forms which resolves the HJ.

The protein resides in the cytoplasm. In terms of biological role, the RuvA-RuvB-RuvC complex processes Holliday junction (HJ) DNA during genetic recombination and DNA repair, while the RuvA-RuvB complex plays an important role in the rescue of blocked DNA replication forks via replication fork reversal (RFR). RuvA specifically binds to HJ cruciform DNA, conferring on it an open structure. The RuvB hexamer acts as an ATP-dependent pump, pulling dsDNA into and through the RuvAB complex. HJ branch migration allows RuvC to scan DNA until it finds its consensus sequence, where it cleaves and resolves the cruciform DNA. The chain is Holliday junction branch migration complex subunit RuvA from Mesomycoplasma hyopneumoniae (strain J / ATCC 25934 / NCTC 10110) (Mycoplasma hyopneumoniae).